We begin with the raw amino-acid sequence, 136 residues long: Glutaredoxin-C8 (136 aa).

The Glutaredoxin domain maps to Ser33–Asp135. A disulfide bridge links Cys53 with Cys56.

It belongs to the glutaredoxin family. CPYC subfamily.

The protein resides in the cytoplasm. In terms of biological role, has a glutathione-disulfide oxidoreductase activity in the presence of NADPH and glutathione reductase. Reduces low molecular weight disulfides and proteins. This is Glutaredoxin-C8 (GRXC8) from Oryza sativa subsp. japonica (Rice).